A 124-amino-acid chain; its full sequence is Small ribosomal subunit protein uS12 (124 aa).

The disordered stretch occupies residues 1–22 (MATINQLVRKPRSRKVAKSDVP). The residue at position 89 (Asp89) is a 3-methylthioaspartic acid. The segment at 104 to 124 (TAGVNDRRQGRSKYGAKRGKS) is disordered. Over residues 113 to 124 (GRSKYGAKRGKS) the composition is skewed to basic residues.

Belongs to the universal ribosomal protein uS12 family. In terms of assembly, part of the 30S ribosomal subunit. Contacts proteins S8 and S17. May interact with IF1 in the 30S initiation complex.

With S4 and S5 plays an important role in translational accuracy. Functionally, interacts with and stabilizes bases of the 16S rRNA that are involved in tRNA selection in the A site and with the mRNA backbone. Located at the interface of the 30S and 50S subunits, it traverses the body of the 30S subunit contacting proteins on the other side and probably holding the rRNA structure together. The combined cluster of proteins S8, S12 and S17 appears to hold together the shoulder and platform of the 30S subunit. The chain is Small ribosomal subunit protein uS12 from Hahella chejuensis (strain KCTC 2396).